The following is a 247-amino-acid chain: Small ribosomal subunit protein uS2 (247 aa).

It belongs to the universal ribosomal protein uS2 family.

The protein is Small ribosomal subunit protein uS2 of Pseudomonas syringae pv. tomato (strain ATCC BAA-871 / DC3000).